The primary structure comprises 392 residues: 8-amino-7-oxononanoate synthase 1 (392 aa).

109-110 (GF) is a pyridoxal 5'-phosphate binding site. Residue His134 participates in substrate binding. Residues Ser181, 206–209 (DDAH), and 237–240 (TLSK) each bind pyridoxal 5'-phosphate. Position 240 is an N6-(pyridoxal phosphate)lysine (Lys240). Thr354 lines the substrate pocket.

It belongs to the class-II pyridoxal-phosphate-dependent aminotransferase family. BioF subfamily. Homodimer. Requires pyridoxal 5'-phosphate as cofactor.

It carries out the reaction 6-carboxyhexanoyl-[ACP] + L-alanine + H(+) = (8S)-8-amino-7-oxononanoate + holo-[ACP] + CO2. The protein operates within cofactor biosynthesis; biotin biosynthesis. Functionally, catalyzes the decarboxylative condensation of pimeloyl-[acyl-carrier protein] and L-alanine to produce 8-amino-7-oxononanoate (AON), [acyl-carrier protein], and carbon dioxide. The chain is 8-amino-7-oxononanoate synthase 1 (kbl) from Bacillus subtilis (strain 168).